An 88-amino-acid polypeptide reads, in one-letter code: Small ribosomal subunit protein uS17 (88 aa).

It belongs to the universal ribosomal protein uS17 family. As to quaternary structure, part of the 30S ribosomal subunit.

One of the primary rRNA binding proteins, it binds specifically to the 5'-end of 16S ribosomal RNA. The protein is Small ribosomal subunit protein uS17 of Pseudomonas aeruginosa (strain LESB58).